Here is a 286-residue protein sequence, read N- to C-terminus: 3-amino-tetrahydro-pyrrolizinone reductase (286 aa).

Tyrosine 146 functions as the Proton acceptor in the catalytic mechanism.

The protein belongs to the short-chain dehydrogenases/reductases (SDR) family.

It carries out the reaction 3-amino-5,6,7,7a-tetrahydro-1H-pyrrolizin-1-one + AH2 = 3-amino-tetrahydro-1H-pyrrolizin-1-ol + A. In terms of biological role, involved in the biosynthetic pathway of pyrrolizwilline, a pyrrolizidine alkaloid. Catalyzes the reduction of 3-amino-tetrahydro-pyrrolizinone to 3-amino-tetrahydro-pyrrolizinol. This Xenorhabdus hominickii protein is 3-amino-tetrahydro-pyrrolizinone reductase (xhpD).